Consider the following 637-residue polypeptide: Neuroendocrine convertase 2 (637 aa).

An N-terminal signal peptide occupies residues 1–24; that stretch reads MEGGCGSQWKAAGFLFCVMVFASA. Positions 25 to 108 are excised as a propeptide; that stretch reads ERPVFTNHFL…QQEGFDRKKR (84 aa). The 325-residue stretch at 128 to 452 folds into the Peptidase S8 domain; sequence QWYLFNTGQA…YGVLDAGAMV (325 aa). Active-site charge relay system residues include Asp-166 and His-207. 2 disulfides stabilise this stretch: Cys-224-Cys-375 and Cys-316-Cys-346. N-linked (GlcNAc...) asparagine glycosylation occurs at Asn-374. Ser-383 (charge relay system) is an active-site residue. One can recognise a P/Homo B domain in the interval 460 to 596; that stretch reads TVPERFHCVG…TLMLHGTQSA (137 aa). Residues Cys-467 and Cys-493 are joined by a disulfide bond. Asn-513 and Asn-523 each carry an N-linked (GlcNAc...) asparagine glycan.

It belongs to the peptidase S8 family. Furin subfamily.

Its subcellular location is the cytoplasmic vesicle. It localises to the secretory vesicle. The protein localises to the secreted. It carries out the reaction Release of protein hormones and neuropeptides from their precursors, generally by hydrolysis of -Lys-Arg-|- bonds.. In terms of biological role, serine endopeptidase which is involved in the processing of hormone and other protein precursors at sites comprised of pairs of basic amino acid residues. Responsible for the release of glucagon from proglucagon in pancreatic A cells. In Mus musculus (Mouse), this protein is Neuroendocrine convertase 2 (Pcsk2).